Here is a 207-residue protein sequence, read N- to C-terminus: Galactoside O-acetyltransferase (207 aa).

Asparagine 87 provides a ligand contact to acetyl-CoA. The active-site Proton donor/acceptor is histidine 117. Acetyl-CoA-binding positions include alanine 144, alanine 162, 167–168 (TK), and arginine 185.

It belongs to the transferase hexapeptide repeat family. Homotrimer.

It localises to the cytoplasm. The enzyme catalyses a beta-D-galactoside + acetyl-CoA = a 6-acetyl-beta-D-galactoside + CoA. This chain is Galactoside O-acetyltransferase (lacA), found in Lactococcus lactis subsp. lactis (strain IL1403) (Streptococcus lactis).